The sequence spans 92 residues: Acylphosphatase (92 aa).

Cys5 and Cys49 are oxidised to a cystine. An Acylphosphatase-like domain is found at 5-92; the sequence is CIIAWIYGRV…SGELTDFRIR (88 aa). Catalysis depends on residues Arg20 and Asn38.

Belongs to the acylphosphatase family.

The catalysed reaction is an acyl phosphate + H2O = a carboxylate + phosphate + H(+). This chain is Acylphosphatase, found in Shigella boydii serotype 4 (strain Sb227).